Reading from the N-terminus, the 185-residue chain is Ribosome-recycling factor (185 aa).

The protein belongs to the RRF family.

It is found in the cytoplasm. Its function is as follows. Responsible for the release of ribosomes from messenger RNA at the termination of protein biosynthesis. May increase the efficiency of translation by recycling ribosomes from one round of translation to another. The sequence is that of Ribosome-recycling factor from Alteromonas mediterranea (strain DSM 17117 / CIP 110805 / LMG 28347 / Deep ecotype).